A 558-amino-acid chain; its full sequence is Type I restriction enzyme MjaIX methylase subunit (558 aa).

Residues 1–37 (MATLDKFLSIKENDEKTKKKESKKKSSKSNKTSESLV) are disordered. Residues 8 to 18 (LSIKENDEKTK) are compositionally biased toward basic and acidic residues. Positions 19 to 28 (KKESKKKSSK) are enriched in basic residues. S-adenosyl-L-methionine contacts are provided by residues 227–232 (KFYTPR), 256–258 (SGG), and Asp-283.

This sequence belongs to the N(4)/N(6)-methyltransferase family. The type I restriction/modification system is composed of three polypeptides R, M and S.

The enzyme catalyses a 2'-deoxyadenosine in DNA + S-adenosyl-L-methionine = an N(6)-methyl-2'-deoxyadenosine in DNA + S-adenosyl-L-homocysteine + H(+). The subtype gamma methyltransferase (M) subunit of a type I restriction enzyme. The M and S subunits together form a methyltransferase (MTase) that methylates A-3 on the top and A-2 on the bottom strand of the sequence 5'-CCAN(5)GTR-3'. In the presence of the R subunit the complex can also act as an endonuclease, binding to the same target sequence but cutting the DNA some distance from this site. Whether the DNA is cut or modified depends on the methylation state of the target sequence. When the target site is unmodified, the DNA is cut. When the target site is hemimethylated, the complex acts as a maintenance MTase modifying the DNA so that both strands become methylated. After locating a non-methylated recognition site, the enzyme complex serves as a molecular motor that translocates DNA in an ATP-dependent manner until a collision occurs that triggers cleavage. The chain is Type I restriction enzyme MjaIX methylase subunit from Methanocaldococcus jannaschii (strain ATCC 43067 / DSM 2661 / JAL-1 / JCM 10045 / NBRC 100440) (Methanococcus jannaschii).